A 377-amino-acid polypeptide reads, in one-letter code: P2Y purinoceptor 2 (377 aa).

Topologically, residues 1 to 32 are extracellular; that stretch reads MAADLGPWNDTINGTWDGDELGYRCRFNEDFK. Residues Asn-9 and Asn-13 are each glycosylated (N-linked (GlcNAc...) asparagine). A helical transmembrane segment spans residues 33-59; that stretch reads YVLLPVSYGVVCVPGLCLNAVALYIFL. The Cytoplasmic segment spans residues 60–70; it reads CRLKTWNASTT. Residues 71–93 form a helical membrane-spanning segment; the sequence is YMFHLAVSDALYAASLPLLVYYY. At 94–110 the chain is on the extracellular side; sequence ARGDHWPFSTVLCKLVR. Cys-106 and Cys-183 form a disulfide bridge. The chain crosses the membrane as a helical span at residues 111 to 129; sequence FLFYTNLYCSILFLTCISV. Residues 130-152 lie on the Cytoplasmic side of the membrane; the sequence is HRCLGVLRPLRSLRWGRARYARR. A helical membrane pass occupies residues 153–172; it reads VAGAVWVLVLACQAPVLYFV. At 173–194 the chain is on the extracellular side; it reads TTSARGGRVTCHDTSAPELFSR. A helical transmembrane segment spans residues 195 to 220; that stretch reads FVAYSSVMLGLLFAVPFAVILVCYVL. Residues 221-246 are Cytoplasmic-facing; that stretch reads MARRLLKPAYGTSGGLPRAKRKSVRT. A helical membrane pass occupies residues 247 to 269; it reads IAVVLAVFALCFLPFHVTRTLYY. The Extracellular portion of the chain corresponds to 270-287; that stretch reads SFRSLDLSCHTLNAINMA. A helical membrane pass occupies residues 288–309; that stretch reads YKVTRPLASANSCLDPVLYFLA. Topologically, residues 310–377 are cytoplasmic; sequence GQRLVRFARD…GSENTKDIRL (68 aa). A disordered region spans residues 318–377; sequence RDAKPPTGPSPATPARRRLGLRRSDRTDMQRIEDVLGSSEDSRRTESTPAGSENTKDIRL. Basic and acidic residues predominate over residues 339-363; that stretch reads RRSDRTDMQRIEDVLGSSEDSRRTE.

Belongs to the G-protein coupled receptor 1 family. Spleen, testis, kidney, liver, lung, heart and brain.

The protein localises to the cell membrane. Functionally, receptor for ATP and UTP coupled to G-proteins that activate a phosphatidylinositol-calcium second messenger system. The affinity range is UTP = ATP &gt; ATP-gamma-S &gt;&gt; 2-methylthio-ATP = ADP. This is P2Y purinoceptor 2 (P2RY2) from Homo sapiens (Human).